The primary structure comprises 257 residues: 5'-nucleotidase SurE (257 aa).

Residues Asp-9, Asp-10, Ser-40, and Asn-92 each contribute to the a divalent metal cation site.

It belongs to the SurE nucleotidase family. A divalent metal cation is required as a cofactor.

It localises to the cytoplasm. The catalysed reaction is a ribonucleoside 5'-phosphate + H2O = a ribonucleoside + phosphate. Its function is as follows. Nucleotidase that shows phosphatase activity on nucleoside 5'-monophosphates. The chain is 5'-nucleotidase SurE from Alkalilimnicola ehrlichii (strain ATCC BAA-1101 / DSM 17681 / MLHE-1).